The sequence spans 180 residues: Adenine phosphoribosyltransferase (180 aa).

This sequence belongs to the purine/pyrimidine phosphoribosyltransferase family. Homodimer.

The protein localises to the cytoplasm. The enzyme catalyses AMP + diphosphate = 5-phospho-alpha-D-ribose 1-diphosphate + adenine. Its pathway is purine metabolism; AMP biosynthesis via salvage pathway; AMP from adenine: step 1/1. Functionally, catalyzes a salvage reaction resulting in the formation of AMP, that is energically less costly than de novo synthesis. This is Adenine phosphoribosyltransferase from Rhizobium meliloti (strain 1021) (Ensifer meliloti).